A 762-amino-acid chain; its full sequence is Protein PHTF1 (762 aa).

The 145-residue stretch at 6 to 150 folds into the PHTF domain; it reads RDAISWYQKK…VHCQIVSTQI (145 aa). The next 3 helical transmembrane spans lie at 77–97, 99–119, and 121–141; these read GLVR…VTSL, IFVW…LYLM, and PIVS…MGTV. Residues 152 to 184 form a disordered region; the sequence is RPSGNNGNRRRRKLRKTVNGDGTRDNGNNSPDK. N-linked (GlcNAc...) asparagine glycans are attached at residues Asn179 and Asn224. Residues Ser272, Ser276, Ser277, Ser334, and Ser336 each carry the phosphoserine modification. Residues 345–415 are disordered; sequence AAFSQGSRSG…NTLHSGTKRD (71 aa). Over residues 348-364 the composition is skewed to low complexity; that stretch reads SQGSRSGMSGGSRSLNL. Residue Asn363 is glycosylated (N-linked (GlcNAc...) asparagine). The span at 365-376 shows a compositional bias: basic and acidic residues; it reads SRRDSESTRHDS. A glycan (N-linked (GlcNAc...) asparagine) is linked at Asn431. 4 helical membrane passes run 473 to 493, 515 to 535, 611 to 631, and 645 to 665; these read GVGY…FPFL, TLFC…INFF, VVVS…CAQV, and WEFL…ASLG. Residues Asn674 and Asn733 are each glycosylated (N-linked (GlcNAc...) asparagine). The helical transmembrane segment at 737–757 threads the bilayer; the sequence is VVILSAVSGVISDLLGFNIRL.

In terms of assembly, interacts with FEM1B. In terms of tissue distribution, highly expressed in testis.

The protein resides in the endoplasmic reticulum membrane. It is found in the golgi apparatus. The protein localises to the cis-Golgi network membrane. This Rattus norvegicus (Rat) protein is Protein PHTF1.